A 512-amino-acid chain; its full sequence is Cytochrome P450 26B1 (512 aa).

Residue cysteine 441 participates in heme binding.

This sequence belongs to the cytochrome P450 family. It depends on heme as a cofactor. Highly expressed in brain, particularly in the cerebellum and pons.

The protein resides in the endoplasmic reticulum membrane. It is found in the microsome membrane. It carries out the reaction all-trans-retinoate + reduced [NADPH--hemoprotein reductase] + O2 = all-trans-4-hydroxyretinoate + oxidized [NADPH--hemoprotein reductase] + H2O + H(+). The enzyme catalyses all-trans-retinoate + reduced [NADPH--hemoprotein reductase] + O2 = all-trans-18-hydroxyretinoate + oxidized [NADPH--hemoprotein reductase] + H2O + H(+). A cytochrome P450 monooxygenase involved in the metabolism of retinoates (RAs), the active metabolites of vitamin A, and critical signaling molecules in animals. RAs exist as at least four different isomers: all-trans-RA (atRA), 9-cis-RA, 13-cis-RA, and 9,13-dicis-RA, where atRA is considered to be the biologically active isomer, although 9-cis-RA and 13-cis-RA also have activity. Catalyzes the hydroxylation of atRA primarily at C-4 and C-18, thereby contributing to the regulation of atRA homeostasis and signaling. Hydroxylation of atRA limits its biological activity and initiates a degradative process leading to its eventual elimination. Involved in the convertion of atRA to all-trans-4-oxo-RA. Can oxidize all-trans-13,14-dihydroretinoate (DRA) to metabolites which could include all-trans-4-oxo-DRA, all-trans-4-hydroxy-DRA, all-trans-5,8-epoxy-DRA, and all-trans-18-hydroxy-DRA. Shows preference for the following substrates: atRA &gt; 9-cis-RA &gt; 13-cis-RA. Plays a central role in germ cell development: acts by degrading RAs in the developing testis, preventing STRA8 expression, thereby leading to delay of meiosis. Required for the maintenance of the undifferentiated state of male germ cells during embryonic development in Sertoli cells, inducing arrest in G0 phase of the cell cycle and preventing meiotic entry. Plays a role in skeletal development, both at the level of patterning and in the ossification of bone and the establishment of some synovial joints. Essential for postnatal survival. Its function is as follows. Also has a significant activity in oxidation of tazarotenic acid and may therefore metabolize that xenobiotic in vivo. In Homo sapiens (Human), this protein is Cytochrome P450 26B1 (CYP26B1).